The sequence spans 283 residues: Formamidopyrimidine-DNA glycosylase (283 aa).

The active-site Schiff-base intermediate with DNA is Pro-2. Glu-3 (proton donor) is an active-site residue. Lys-61 functions as the Proton donor; for beta-elimination activity in the catalytic mechanism. Positions 94, 113, and 159 each coordinate DNA. The FPG-type zinc finger occupies Asp-245–Pro-279. Arg-269 serves as the catalytic Proton donor; for delta-elimination activity.

Belongs to the FPG family. As to quaternary structure, monomer. Zn(2+) serves as cofactor.

It catalyses the reaction Hydrolysis of DNA containing ring-opened 7-methylguanine residues, releasing 2,6-diamino-4-hydroxy-5-(N-methyl)formamidopyrimidine.. The catalysed reaction is 2'-deoxyribonucleotide-(2'-deoxyribose 5'-phosphate)-2'-deoxyribonucleotide-DNA = a 3'-end 2'-deoxyribonucleotide-(2,3-dehydro-2,3-deoxyribose 5'-phosphate)-DNA + a 5'-end 5'-phospho-2'-deoxyribonucleoside-DNA + H(+). In terms of biological role, involved in base excision repair of DNA damaged by oxidation or by mutagenic agents. Acts as a DNA glycosylase that recognizes and removes damaged bases. Has a preference for oxidized purines, such as 7,8-dihydro-8-oxoguanine (8-oxoG). Has AP (apurinic/apyrimidinic) lyase activity and introduces nicks in the DNA strand. Cleaves the DNA backbone by beta-delta elimination to generate a single-strand break at the site of the removed base with both 3'- and 5'-phosphates. This Mycolicibacterium paratuberculosis (strain ATCC BAA-968 / K-10) (Mycobacterium paratuberculosis) protein is Formamidopyrimidine-DNA glycosylase.